Reading from the N-terminus, the 76-residue chain is Small ribosomal subunit protein uS17 (76 aa).

Belongs to the universal ribosomal protein uS17 family. In terms of assembly, part of the 30S ribosomal subunit.

Its function is as follows. One of the primary rRNA binding proteins, it binds specifically to the 5'-end of 16S ribosomal RNA. This Dinoroseobacter shibae (strain DSM 16493 / NCIMB 14021 / DFL 12) protein is Small ribosomal subunit protein uS17.